Consider the following 600-residue polypeptide: Adenine deaminase (600 aa).

The protein belongs to the metallo-dependent hydrolases superfamily. Adenine deaminase family. The cofactor is Mn(2+).

It carries out the reaction adenine + H2O + H(+) = hypoxanthine + NH4(+). This Bradyrhizobium sp. (strain BTAi1 / ATCC BAA-1182) protein is Adenine deaminase.